Consider the following 89-residue polypeptide: Small ribosomal subunit protein uS15 (89 aa).

This sequence belongs to the universal ribosomal protein uS15 family. In terms of assembly, part of the 30S ribosomal subunit. Forms a bridge to the 50S subunit in the 70S ribosome, contacting the 23S rRNA.

Its function is as follows. One of the primary rRNA binding proteins, it binds directly to 16S rRNA where it helps nucleate assembly of the platform of the 30S subunit by binding and bridging several RNA helices of the 16S rRNA. Forms an intersubunit bridge (bridge B4) with the 23S rRNA of the 50S subunit in the ribosome. The protein is Small ribosomal subunit protein uS15 of Bifidobacterium animalis subsp. lactis (strain AD011).